A 1206-amino-acid polypeptide reads, in one-letter code: Pre-mRNA-splicing factor prp12 (1206 aa).

Belongs to the RSE1 family. As to quaternary structure, belongs to the 40S cdc5-associated complex (or cwf complex), a spliceosome sub-complex reminiscent of a late-stage spliceosome composed of the U2, U5 and U6 snRNAs and at least brr2, cdc5, cwf2/prp3, cwf3/syf1, cwf4/syf3, cwf5/ecm2, spp42/cwf6, cwf7/spf27, cwf8, cwf9, cwf10, cwf11, cwf12, prp45/cwf13, cwf14, cwf15, cwf16, cwf17, cwf18, cwf19, cwf20, cwf21, cwf22, cwf23, cwf24, cwf25, cwf26, cyp7/cwf27, cwf28, cwf29/ist3, lea1, msl1, prp5/cwf1, prp10, prp12/sap130, prp17, prp22, sap61, sap62, sap114, sap145, slu7, smb1, smd1, smd3, smf1, smg1 and syf2.

Its subcellular location is the nucleus. Its function is as follows. Involved in mRNA splicing and G2/M transition. The sequence is that of Pre-mRNA-splicing factor prp12 (prp12) from Schizosaccharomyces pombe (strain 972 / ATCC 24843) (Fission yeast).